A 178-amino-acid polypeptide reads, in one-letter code: Capsid assembly scaffolding protein (178 aa).

Belongs to the SPP1-like scaffolding protein family. In terms of assembly, homodimer.

Its function is as follows. Scaffolding protein involved in the icosahedric procapsid assembly. Coassembles with the capsid proteins to form the procapsid, in which the scaffolding protein is found within the external shell of icosahedrally arranged capsid protein subunits. In a subsequent step the scaffolding protein molecules are released from the procapsid. The chain is Capsid assembly scaffolding protein (g20) from Lactobacillus delbrueckii (Lactococcus delbrueckii bacteriophage LL-H).